The following is a 118-amino-acid chain: Appetite-regulating hormone (118 aa).

The first 24 residues, 1–24, serve as a signal peptide directing secretion; the sequence is MPSTGTICSLLLLSVLLMADLAMA. Residue Ser27 is the site of O-decanoyl serine; alternate attachment. A lipid anchor (O-hexanoyl serine; alternate) is attached at Ser27. Ser27 is lipidated: O-octanoyl serine; alternate. A disordered region spans residues 29–50; it reads LSPEHQKVQQRKESKKPAAKLK. The segment covering 32–44 has biased composition (basic and acidic residues); that stretch reads EHQKVQQRKESKK. A propeptide spans 53-76 (removed in mature form); the sequence is ALEGWLGPEDSGEVEGTEDKLEIR. A Leucine amide modification is found at Leu99. Residues 100–118 constitute a propeptide, removed in mature form; it reads GKFLQDILWEEVTEAPADK.

The protein belongs to the motilin family. Post-translationally, O-octanoylated by GOAT/MBOAT4. O-octanoylation is essential for ghrelin activity. Amidation of Leu-99 is essential for obestatin activity.

It is found in the secreted. Its function is as follows. Ghrelin is the ligand for growth hormone secretagogue receptor type 1 (GHSR). Induces the release of growth hormone from the pituitary. Has an appetite-stimulating effect, induces adiposity and stimulates gastric acid secretion. Involved in growth regulation. In terms of biological role, obestatin may be the ligand for GPR39. May have an appetite-reducing effect resulting in decreased food intake. May reduce gastric emptying activity and jejunal motility. The protein is Appetite-regulating hormone (GHRL) of Sus scrofa (Pig).